A 220-amino-acid polypeptide reads, in one-letter code: Flagellin A2 (220 aa).

Positions 1–11 (MFNNITDDDRG) are excised as a propeptide. N-linked (GlcNAc...) asparagine glycans are attached at residues asparagine 78, asparagine 95, asparagine 112, and asparagine 124.

Belongs to the archaeal flagellin family. Glycosylated by a pentasaccharide similar to the S-layer glycoprotein, probably comprising a hexose, 2 hexuronic acids, a methyl ester of a hexuronic acid and mannose.

Its subcellular location is the archaeal flagellum. Functionally, flagellin that plays both structural and regulatory roles in flagella biosynthesis. Does not constitute a major flagellin in terms of abundance contrary to FlgA1: may regulate the flagella-dependent swimming motility depending on the relative abundance of FlgA1. Not involved in PibD-dependent surface adhesion. In Haloferax volcanii (strain ATCC 29605 / DSM 3757 / JCM 8879 / NBRC 14742 / NCIMB 2012 / VKM B-1768 / DS2) (Halobacterium volcanii), this protein is Flagellin A2 (flgA2).